The following is a 156-amino-acid chain: ATP synthase subunit b (156 aa).

A helical transmembrane segment spans residues 7 to 27 (IFFQMLVFFVLGWFTMKFVWP).

Belongs to the ATPase B chain family. In terms of assembly, F-type ATPases have 2 components, F(1) - the catalytic core - and F(0) - the membrane proton channel. F(1) has five subunits: alpha(3), beta(3), gamma(1), delta(1), epsilon(1). F(0) has three main subunits: a(1), b(2) and c(10-14). The alpha and beta chains form an alternating ring which encloses part of the gamma chain. F(1) is attached to F(0) by a central stalk formed by the gamma and epsilon chains, while a peripheral stalk is formed by the delta and b chains.

Its subcellular location is the cell inner membrane. In terms of biological role, f(1)F(0) ATP synthase produces ATP from ADP in the presence of a proton or sodium gradient. F-type ATPases consist of two structural domains, F(1) containing the extramembraneous catalytic core and F(0) containing the membrane proton channel, linked together by a central stalk and a peripheral stalk. During catalysis, ATP synthesis in the catalytic domain of F(1) is coupled via a rotary mechanism of the central stalk subunits to proton translocation. Functionally, component of the F(0) channel, it forms part of the peripheral stalk, linking F(1) to F(0). This is ATP synthase subunit b from Bordetella petrii (strain ATCC BAA-461 / DSM 12804 / CCUG 43448).